The following is a 238-amino-acid chain: Probable transglycosylase SceD 3 (238 aa).

The N-terminal stretch at 1–27 (MKKTVVASTLAVGLGVTGFAAGNSADA) is a signal peptide. Residues 82 to 161 (YGQGSTNAPA…SEASEGSSVN (80 aa)) are disordered. Over residues 89–156 (APAQETAEQP…NESSSSEASE (68 aa)) the composition is skewed to low complexity.

It belongs to the transglycosylase family. SceD subfamily.

It is found in the secreted. Its function is as follows. Is able to cleave peptidoglycan and affects clumping and separation of bacterial cells. In Staphylococcus saprophyticus subsp. saprophyticus (strain ATCC 15305 / DSM 20229 / NCIMB 8711 / NCTC 7292 / S-41), this protein is Probable transglycosylase SceD 3 (sceD3).